Consider the following 440-residue polypeptide: MNDYHLEDTTSELEALRLENAQLREQLAKREDSSRDYPLSLEEYQRYGRQMIVEETGGVAGQVKLKNTKVLVVGAGGLGCPALPYLAGAGVGQIGIVDNDVVETSNLHRQVLHDSSRVGMLKCESARQYITKLNPHINVVTYPVRLNSSNAFDIFKGYNYILDCTDSPLTRYLVSDVAVNLGITVVSASGLGTEGQLTILNFNNIGPCYRCFYPTPPPPNAVTSCQEGGVIGPCIGLVGTMMAVETLKLILGIYTNENFSPFLMLYSGFPQQSLRTFKMRGRQEKCLCCGKNRTITKEAIEKGEINYELFCGARNYNVCEPDERISVDAFQRIYKDDEFLAKHIFLDVRPSHHYEISHFPEAVNIPIKNLRDMNGDLKKLQEKLPSVEKDSNIVILCRYGNDSQLATRLLKDKFGFSNVRDVRGGYFKYIDDIDQTIPKY.

Position 1 is an N-acetylmethionine (methionine 1). ATP contacts are provided by residues glycine 77, aspartate 98, 105-109, lysine 122, and 166-167; these read SNLHR and DS. Zn(2+)-binding residues include cysteine 208 and cysteine 211. Catalysis depends on cysteine 225, which acts as the Glycyl thioester intermediate; for adenylyltransferase activity. Residues cysteine 286 and cysteine 289 each coordinate Zn(2+). Serine 326 carries the post-translational modification Phosphoserine. The 100-residue stretch at 339-438 folds into the Rhodanese domain; that stretch reads FLAKHIFLDV…YIDDIDQTIP (100 aa). Cysteine 397 functions as the Cysteine persulfide intermediate; for sulfurtransferase activity in the catalytic mechanism.

In the N-terminal section; belongs to the HesA/MoeB/ThiF family. UBA4 subfamily. Zn(2+) serves as cofactor.

The protein localises to the cytoplasm. It localises to the cytosol. The protein operates within tRNA modification; 5-methoxycarbonylmethyl-2-thiouridine-tRNA biosynthesis. Functionally, plays a central role in 2-thiolation of mcm(5)S(2)U at tRNA wobble positions of cytosolic tRNA(Lys), tRNA(Glu) and tRNA(Gln). Acts by mediating the C-terminal thiocarboxylation of sulfur carrier URM1. Its N-terminus first activates URM1 as acyl-adenylate (-COAMP), then the persulfide sulfur on the catalytic cysteine is transferred to URM1 to form thiocarboxylation (-COSH) of its C-terminus. The reaction probably involves hydrogen sulfide that is generated from the persulfide intermediate and that acts as a nucleophile towards URM1. Subsequently, a transient disulfide bond is formed. Does not use thiosulfate as sulfur donor; NFS1 probably acting as a sulfur donor for thiocarboxylation reactions. Prior mcm(5) tRNA modification by the elongator complex is required for 2-thiolation. May also be involved in protein urmylation. The chain is Adenylyltransferase and sulfurtransferase UBA4 from Saccharomyces cerevisiae (strain RM11-1a) (Baker's yeast).